Reading from the N-terminus, the 1083-residue chain is Error-prone DNA polymerase (1083 aa).

Belongs to the DNA polymerase type-C family. DnaE2 subfamily.

The protein localises to the cytoplasm. The catalysed reaction is DNA(n) + a 2'-deoxyribonucleoside 5'-triphosphate = DNA(n+1) + diphosphate. In terms of biological role, DNA polymerase involved in damage-induced mutagenesis and translesion synthesis (TLS). It is not the major replicative DNA polymerase. This is Error-prone DNA polymerase from Xanthomonas oryzae pv. oryzae (strain KACC10331 / KXO85).